The sequence spans 189 residues: UPF0301 protein PA14_05290 (189 aa).

This sequence belongs to the UPF0301 (AlgH) family.

The polypeptide is UPF0301 protein PA14_05290 (Pseudomonas aeruginosa (strain UCBPP-PA14)).